The sequence spans 928 residues: RhoGEF domain-containing protein gxcH (928 aa).

Residues 30–48 (SKSFDNNNNNNSNTNNIKN) are compositionally biased toward low complexity. 3 disordered regions span residues 30–76 (SKSF…PPVP), 90–201 (ITNY…PPLG), and 318–410 (DNGV…NKDT). Residues 93-103 (YIPTTPPSINI) show a composition bias toward polar residues. Acidic residues predominate over residues 112–123 (DNYDDNYDDNYS). Polar residues-rich tracts occupy residues 129 to 141 (TSTTPPQFNSPEF), 175 to 187 (ETFNDQNNNEGLQ), and 334 to 367 (KSGTTLDSEPNLKSVSSSNRGSFVISKSSYNLRG). A compositionally biased stretch (low complexity) spans 377–407 (NQTTNKNNSNNNNNNTTTNNNNNNNNNNNNN). Residues 484-671 (IFNKVVKEII…GKIVSDINGK (188 aa)) form the DH domain. Residues 699-807 (FIGEGKVKKV…NKIEDQIVSE (109 aa)) are PH-like. The disordered stretch occupies residues 835–928 (SDSQSDFVDH…NTEPENFSFY (94 aa)). Positions 848–857 (QEQQEQQQQQ) are enriched in low complexity.

GTPase-activating protein. This chain is RhoGEF domain-containing protein gxcH (gxcH), found in Dictyostelium discoideum (Social amoeba).